We begin with the raw amino-acid sequence, 154 residues long: Prefoldin subunit 5 (154 aa).

Position 2 is an N-acetylalanine (Ala2). Lys42 carries the N6-acetyllysine modification. A Phosphoserine modification is found at Ser56.

This sequence belongs to the prefoldin subunit alpha family. In terms of assembly, heterohexamer of two PFD-alpha type and four PFD-beta type subunits. Binds to MYC; interacts with its N-terminal domain. As to expression, highly expressed in pancreas and skeletal muscle and moderately in other tissues.

It is found in the nucleus. The protein localises to the cytoplasm. In terms of biological role, binds specifically to cytosolic chaperonin (c-CPN) and transfers target proteins to it. Binds to nascent polypeptide chain and promotes folding in an environment in which there are many competing pathways for nonnative proteins. Represses the transcriptional activity of MYC. The sequence is that of Prefoldin subunit 5 (PFDN5) from Homo sapiens (Human).